The sequence spans 429 residues: MNFSESERLQQLSNEYILGGVNSPSRSYKAVGGGAPVVMKEGHGAYLYDVDGNKFIDYLQAYGPIITGHAHPHITKAIQEQAAKGVLFGTPTELEIEFSKKLRDAIPSLEKIRFVNSGTEAVMTTIRVARAYTKRNKIIKFAGSYHGHSDLVLVAAGSGPSQLGSPDSAGVPESVAREVITVPFNDINAYKEAIEFWGDEIAAVLVEPIVGNFGMVMPQPGFLEEVNEISHNNGTLVIYDEVITAFRFHYGAAQDLLGVIPDLTAFGKIVGGGLPIGGYGGRQDIMEQVAPLGPAYQAGTMAGNPLSMKAGIALLEVLEQDGVYEKLDSLGQQLEEGLLKLIEKHNITATINRIYGSLTLYFTDEKVTHYDQVEHSDGEAFGKFFKLMLNQGINLAPSKFEAWFLTTEHTEEDIKQTLKAADYAFSQMK.

Lys-268 carries the N6-(pyridoxal phosphate)lysine modification.

This sequence belongs to the class-III pyridoxal-phosphate-dependent aminotransferase family. HemL subfamily. As to quaternary structure, homodimer. Pyridoxal 5'-phosphate is required as a cofactor.

The protein resides in the cytoplasm. The enzyme catalyses (S)-4-amino-5-oxopentanoate = 5-aminolevulinate. It participates in porphyrin-containing compound metabolism; protoporphyrin-IX biosynthesis; 5-aminolevulinate from L-glutamyl-tRNA(Glu): step 2/2. The polypeptide is Glutamate-1-semialdehyde 2,1-aminomutase 2 (Staphylococcus aureus (strain USA300)).